The chain runs to 335 residues: Biotin synthase (335 aa).

A Radical SAM core domain is found at Ala50–Arg279. Cys65, Cys69, and Cys72 together coordinate [4Fe-4S] cluster. Residues Cys110, Cys142, Cys202, and Arg274 each contribute to the [2Fe-2S] cluster site.

It belongs to the radical SAM superfamily. Biotin synthase family. Homodimer. Requires [4Fe-4S] cluster as cofactor. [2Fe-2S] cluster serves as cofactor.

The catalysed reaction is (4R,5S)-dethiobiotin + (sulfur carrier)-SH + 2 reduced [2Fe-2S]-[ferredoxin] + 2 S-adenosyl-L-methionine = (sulfur carrier)-H + biotin + 2 5'-deoxyadenosine + 2 L-methionine + 2 oxidized [2Fe-2S]-[ferredoxin]. It functions in the pathway cofactor biosynthesis; biotin biosynthesis; biotin from 7,8-diaminononanoate: step 2/2. Catalyzes the conversion of dethiobiotin (DTB) to biotin by the insertion of a sulfur atom into dethiobiotin via a radical-based mechanism. The polypeptide is Biotin synthase (Methylorubrum extorquens (strain CM4 / NCIMB 13688) (Methylobacterium extorquens)).